The following is a 481-amino-acid chain: tRNA-2-methylthio-N(6)-dimethylallyladenosine synthase (481 aa).

Residues 24 to 140 (KKLFIESYGC…LPNLLNEVEE (117 aa)) enclose the MTTase N-terminal domain. The [4Fe-4S] cluster site is built by cysteine 33, cysteine 69, cysteine 103, cysteine 178, cysteine 182, and cysteine 185. The Radical SAM core domain occupies 164–411 (MSNGITALVA…DLQQKHAWWR (248 aa)). The 64-residue stretch at 413–476 (EDFIGQTVEV…SGTLKGEAVG (64 aa)) folds into the TRAM domain.

The protein belongs to the methylthiotransferase family. MiaB subfamily. As to quaternary structure, monomer. [4Fe-4S] cluster is required as a cofactor.

Its subcellular location is the cytoplasm. The catalysed reaction is N(6)-dimethylallyladenosine(37) in tRNA + (sulfur carrier)-SH + AH2 + 2 S-adenosyl-L-methionine = 2-methylsulfanyl-N(6)-dimethylallyladenosine(37) in tRNA + (sulfur carrier)-H + 5'-deoxyadenosine + L-methionine + A + S-adenosyl-L-homocysteine + 2 H(+). Functionally, catalyzes the methylthiolation of N6-(dimethylallyl)adenosine (i(6)A), leading to the formation of 2-methylthio-N6-(dimethylallyl)adenosine (ms(2)i(6)A) at position 37 in tRNAs that read codons beginning with uridine. In Flavobacterium psychrophilum (strain ATCC 49511 / DSM 21280 / CIP 103535 / JIP02/86), this protein is tRNA-2-methylthio-N(6)-dimethylallyladenosine synthase.